A 538-amino-acid polypeptide reads, in one-letter code: RNA-binding protein RO60 (538 aa).

One can recognise a TROVE domain in the interval 16 to 369 (VPNSEGCYVW…SFKLVEPTGK (354 aa)). An RNA-binding region spans residues 120–284 (RIPTHLFTFI…DMPLTALLRN (165 aa)). Residues 361–538 (FKLVEPTGKR…VIRNFTLDLI (178 aa)) form a VWFA-like domain region. S378, S380, and T445 together coordinate a divalent metal cation.

This sequence belongs to the Ro 60 kDa family.

Its subcellular location is the cytoplasm. In terms of biological role, RNA-binding protein that binds to misfolded non-coding RNAs, pre-5S rRNA, and several small cytoplasmic RNA molecules known as Y RNAs. May play roles in cilia formation and/or maintenance. The protein is RNA-binding protein RO60 of Xenopus laevis (African clawed frog).